A 132-amino-acid chain; its full sequence is Small ribosomal subunit protein uS9 (132 aa).

This sequence belongs to the universal ribosomal protein uS9 family.

The protein is Small ribosomal subunit protein uS9 of Leptospira borgpetersenii serovar Hardjo-bovis (strain JB197).